The primary structure comprises 713 residues: Histone-lysine N-methyltransferase SETDB2 (713 aa).

The interval 78–109 (PEVNTHRSNHTPVTQSEQENKSSAVPSASCDN) is disordered. Polar residues predominate over residues 87–109 (HTPVTQSEQENKSSAVPSASCDN). The MBD domain occupies 161–233 (LSLKGENPLQ…DNFSFNTYVQ (73 aa)). Residues 294-367 (DSCDCSEGCI…MCQNRVIQHG (74 aa)) enclose the Pre-SET domain. Zn(2+)-binding residues include C296, C298, C302, C308, C310, C348, C352, C354, and C359. In terms of domain architecture, SET spans 370–688 (VRLQVFKSEK…ARTELTWDYG (319 aa)). Residue 380–382 (KGW) participates in S-adenosyl-L-methionine binding. Composition is skewed to basic and acidic residues over residues 511–534 (EDKN…HEDL) and 579–592 (TKQV…KSQE). Disordered regions lie at residues 511 to 549 (EDKN…QLTE) and 579 to 608 (TKQV…CDEE). Residues R642 and 645–646 (NH) each bind S-adenosyl-L-methionine. Zn(2+) is bound by residues C648, C701, C703, and C708.

Belongs to the class V-like SAM-binding methyltransferase superfamily.

It localises to the nucleus. The protein localises to the chromosome. The enzyme catalyses N(6),N(6)-dimethyl-L-lysyl(9)-[histone H3] + S-adenosyl-L-methionine = N(6),N(6),N(6)-trimethyl-L-lysyl(9)-[histone H3] + S-adenosyl-L-homocysteine + H(+). Its function is as follows. Histone methyltransferase involved in left-right axis specification in early development and mitosis. Specifically trimethylates 'Lys-9' of histone H3 (H3K9me3). H3K9me3 is a specific tag for epigenetic transcriptional repression that recruits HP1 (CBX1, CBX3 and/or CBX5) proteins to methylated histones. Contributes to H3K9me3 in both the interspersed repetitive elements and centromere-associated repeats. Plays a role in chromosome condensation and segregation during mitosis. This is Histone-lysine N-methyltransferase SETDB2 (Setdb2) from Mus musculus (Mouse).